We begin with the raw amino-acid sequence, 782 residues long: MFPPSGSTGLIPPSHFQARPLSTLPRMAPTWLSDIPLVQPPGHQDVSERRLDTQRPQVTMWERDVSSDRQEPGRRGRSWGLEGSQALSQQAEVIARQLQELRRLEEEVRLLRETSLQQKMRLEAQAMELEALARAEKAGRAEAEGLRAALAGAEVVRKNLEEGSQRELEEVQRLHQEQLSSLTQAHEEALSSLTSKAEGLEKSLSSLETRRAGEAKELAEAQREAELLRKQLSKTQEDLEAQVTLVENLRKYVGEQVPSEVHSQTWELERQKLLETMQHLQEDRDSLQATVELLQVRVQSLTHILALQEEELTRKVQPSDSLEPEFTRKCQSLLNRWREKVFALMVQLKAQELEHSDSVKQLKGQVASLQEKVTSQSQEQAILQRSLQDKAAEVEVERMGAKGLQLELSRAQEARRRWQQQTASAEEQLRLVVNAVSSSQIWLETTMAKVEEAAAQLPSLNNRLSYAVRKVHTIRGLIARKLALAQLRQESCPLPPPVADVSLELQQLREERNRLDAELQLSARLIQQEVGRAREQGEAERQQLSKVAQQLERELQQTQESLASLGLQLEVARQGQQESTEEAASLRQELTQQQELYGQALQEKVAEVETRLREQLSDTERRLNEARREHAKAVVSLRQIQRRAAQEKERSQELRRLQEEARKEEGQRLARRLQELERDKNLMLATLQQEGLLSRYKQQRLLTVLPSLLDKKKSVVSSPRPPECSASAPIAAAVPTRESIKGSLSVLLDDLQGLSEAISKEEAVCQGDNLDRCSSSNPQMSS.

Basic and acidic residues-rich tracts occupy residues 62 to 74 and 208 to 218; these read ERDVSSDRQEPGR and ETRRAGEAKEL. 2 disordered regions span residues 62-82 and 182-218; these read ERDVSSDRQEPGRRGRSWGLE and LTQAHEEALSSLTSKAEGLEKSLSSLETRRAGEAKEL. Coiled-coil stretches lie at residues 82–314, 344–437, and 498–691; these read EGSQ…ELTR, LMVQ…NAVS, and VADV…QQEG.

It localises to the cytoplasm. The protein resides in the nucleus. Its function is as follows. May be a regulator of keratinocyte proliferation or differentiation. The sequence is that of Coiled-coil alpha-helical rod protein 1 (CCHCR1) from Pan paniscus (Pygmy chimpanzee).